Reading from the N-terminus, the 370-residue chain is tRNA-specific 2-thiouridylase MnmA (370 aa).

Residues 11–18 and methionine 37 contribute to the ATP site; that span reads GMSGGVDS. Residues 97–99 are interaction with target base in tRNA; it reads NPD. Cysteine 102 acts as the Nucleophile in catalysis. A disulfide bridge links cysteine 102 with cysteine 199. Glycine 126 lines the ATP pocket. The interval 149–151 is interaction with tRNA; sequence KDQ. The active-site Cysteine persulfide intermediate is cysteine 199. Residues 307–308 form an interaction with tRNA region; the sequence is RY.

Belongs to the MnmA/TRMU family.

The protein resides in the cytoplasm. It carries out the reaction S-sulfanyl-L-cysteinyl-[protein] + uridine(34) in tRNA + AH2 + ATP = 2-thiouridine(34) in tRNA + L-cysteinyl-[protein] + A + AMP + diphosphate + H(+). Functionally, catalyzes the 2-thiolation of uridine at the wobble position (U34) of tRNA, leading to the formation of s(2)U34. The protein is tRNA-specific 2-thiouridylase MnmA of Staphylococcus saprophyticus subsp. saprophyticus (strain ATCC 15305 / DSM 20229 / NCIMB 8711 / NCTC 7292 / S-41).